Here is a 530-residue protein sequence, read N- to C-terminus: Cation channel sperm-associated protein 2 (530 aa).

Residues 1–108 are Cytoplasmic-facing; it reads MAAYQQEEQM…LWAGWVLECP (108 aa). The helical transmembrane segment at 109–131 threads the bilayer; it reads LFKNFIIFLVFLNTIILMVEIEL. The Extracellular portion of the chain corresponds to 132-140; the sequence is LESTNTKLW. Residues 141-166 traverse the membrane as a helical segment; that stretch reads PLKLTLEVAAWFILLIFILEILLKWL. Over 167 to 175 the chain is Cytoplasmic; the sequence is SNFSVFWKS. Residues 176–200 traverse the membrane as a helical segment; sequence AWNVFDFVVTMLSLLPEVVVLVGVT. Topologically, residues 201-203 are extracellular; sequence GQS. A helical membrane pass occupies residues 204–222; the sequence is VWLQLLRICRVLRSLKLLA. The Cytoplasmic segment spans residues 223-239; sequence QFRQIQIIILVLVRALK. A helical membrane pass occupies residues 240-262; it reads SMTFLLMLLLIFFYIFAVTGVYV. Residues 263–281 lie on the Extracellular side of the membrane; sequence FSEYTRSPRQDLEYHVFFS. An intramembrane region (helical; Pore-forming) is located at residues 282–294; it reads DLPNSLVTVFILF. At 295–314 the chain is on the extracellular side; that stretch reads TLDHWYALLQDVWKVPEVSR. A helical transmembrane segment spans residues 315 to 341; that stretch reads IFSSIYFILWLLLGSIIFRSIIVAMMV. Residues 342–530 are Cytoplasmic-facing; that stretch reads TNFQNIRKEL…VQALMNLEDK (189 aa). Residues 378–458 form a disordered region; the sequence is MSHEALTSSH…TSSSYSSSSE (81 aa). A compositionally biased stretch (basic and acidic residues) spans 429 to 440; the sequence is KTEETLSKKREY. Over residues 442 to 458 the composition is skewed to low complexity; sequence SSSCVSSTSSSYSSSSE.

It belongs to the cation channel sperm-associated (TC 1.A.1.19) family. Component of the CatSper complex or CatSpermasome composed of the core pore-forming members CATSPER1, CATSPER2, CATSPER3 and CATSPER4 as well as auxiliary members CATSPERB, CATSPERG, CATSPERD, CATSPERE, CATSPERZ, C2CD6/CATSPERT, TMEM249, TMEM262 and EFCAB9. HSPA1 may be an additional auxiliary complex member. The core complex members CATSPER1, CATSPER2, CATSPER3 and CATSPER4 form a heterotetrameric channel. The auxiliary CATSPERB, CATSPERG, CATSPERD and CATSPERE subunits form a pavilion-like structure over the pore which stabilizes the complex through interactions with CATSPER4, CATSPER3, CATSPER1 and CATSPER2 respectively. TMEM262/CATSPERH interacts with CATSPERB, further stabilizing the complex. C2CD6/CATSPERT interacts at least with CATSPERD and is required for targeting the CatSper complex in the flagellar membrane. Interacts with Ca(v)3.3/CACNA1I, leading to suppression of T-type calcium channel activity. In terms of tissue distribution, testis-specific.

The protein resides in the cell projection. Its subcellular location is the cilium. It is found in the flagellum membrane. The catalysed reaction is Ca(2+)(in) = Ca(2+)(out). Its activity is regulated as follows. The CatSper calcium channel is indirectly activated by extracellular progesterone and prostaglandins following the sequence: progesterone &gt; PGF1-alpha = PGE1 &gt; PGA1 &gt; PGE2 &gt;&gt; PGD2. The CatSper calcium channel is directly inhibited by endocannabinoid 2-arachidonoylglycerol (2AG). Indirect activation by progesterone takes place via the following mechanism: progesterone binds and activates the acylglycerol lipase ABHD2, which in turn mediates hydrolysis of 2AG inhibitor, relieving inhibition of the CatSper channel. The primary effect of progesterone activation is to shift voltage dependence towards more physiological, negative membrane potentials; it is not mediated by metabotropic receptors and second messengers. Sperm capacitation enhances the effect of progesterone by providing additional negative shift. Also activated by the elevation of intracellular pH. Functionally, pore-forming subunit of the CatSper complex, a sperm-specific voltage-gated calcium channel, that plays a central role in calcium-dependent physiological responses essential for successful fertilization, such as sperm hyperactivation, acrosome reaction and chemotaxis towards the oocyte. This is Cation channel sperm-associated protein 2 (CATSPER2) from Homo sapiens (Human).